The chain runs to 107 residues: Iron-sulfur cluster assembly protein CyaY (107 aa).

The protein belongs to the frataxin family.

In terms of biological role, involved in iron-sulfur (Fe-S) cluster assembly. May act as a regulator of Fe-S biogenesis. This is Iron-sulfur cluster assembly protein CyaY from Neisseria meningitidis serogroup A / serotype 4A (strain DSM 15465 / Z2491).